A 290-amino-acid chain; its full sequence is Large ribosomal subunit protein uL3 (290 aa).

Gln-152 is modified (N5-methylglutamine). The disordered stretch occupies residues 250–290; the sequence is ARLAEEQAAAEAESLAQAEAEIAAEGSDAAPEGDADKKDGE. The segment covering 255 to 274 has biased composition (low complexity); sequence EQAAAEAESLAQAEAEIAAE.

It belongs to the universal ribosomal protein uL3 family. Part of the 50S ribosomal subunit. Forms a cluster with proteins L14 and L19. Post-translationally, methylated by PrmB.

Its function is as follows. One of the primary rRNA binding proteins, it binds directly near the 3'-end of the 23S rRNA, where it nucleates assembly of the 50S subunit. The chain is Large ribosomal subunit protein uL3 from Jannaschia sp. (strain CCS1).